We begin with the raw amino-acid sequence, 398 residues long: 2-amino-3-ketobutyrate coenzyme A ligase (398 aa).

Pyridoxal 5'-phosphate is bound at residue 111 to 112; the sequence is CF. A substrate-binding site is contributed by histidine 136. Residues serine 185, 210–213, 241–244, and 274–275 each bind pyridoxal 5'-phosphate; these read DDSH, TLGK, and SN. Lysine 244 is modified (N6-(pyridoxal phosphate)lysine). Arginine 368 lines the substrate pocket.

The protein belongs to the class-II pyridoxal-phosphate-dependent aminotransferase family. In terms of assembly, homodimer. Requires pyridoxal 5'-phosphate as cofactor.

It catalyses the reaction glycine + acetyl-CoA = (2S)-2-amino-3-oxobutanoate + CoA. It functions in the pathway amino-acid degradation; L-threonine degradation via oxydo-reductase pathway; glycine from L-threonine: step 2/2. In terms of biological role, catalyzes the cleavage of 2-amino-3-ketobutyrate to glycine and acetyl-CoA. In Salmonella typhimurium (strain LT2 / SGSC1412 / ATCC 700720), this protein is 2-amino-3-ketobutyrate coenzyme A ligase.